A 155-amino-acid chain; its full sequence is Fibroblast growth factor 1 (155 aa).

At Ala2 the chain carries N-acetylalanine. The propeptide occupies Ala2–Arg15. A heparin-binding site is contributed by Asn33. The segment at Lys127–Lys143 is heparin-binding.

The protein belongs to the heparin-binding growth factors family. Monomer. Homodimer. Interacts with FGFR1, FGFR2, FGFR3 and FGFR4. Affinity between fibroblast growth factors (FGFs) and their receptors is increased by heparan sulfate glycosaminoglycans that function as coreceptors. Found in a complex with FGFBP1, FGF1 and FGF2. Interacts with FGFBP1. Part of a Cu(2+)-dependent multiprotein aggregate containing FGF1, S100A13 and SYT1. Interacts with SYT1. Interacts with S100A13. Interacts with LRRC59. Interacts with CSNKA, CSNKB and FIBP. While binding with LRRC59, CSNKA and FIBP seem mutually exclusive, CSNKB and FIBP may cooperatively interact with FGF1. Forms a ternary complex with FGFR1 and ITGAV:ITGB3 and induces the recruitment of PTPN11 to the complex. In the nucleus, phosphorylated by PKC/PRKCD.

The protein resides in the secreted. The protein localises to the cytoplasm. Its subcellular location is the cell cortex. It is found in the cytosol. It localises to the nucleus. Its function is as follows. Plays an important role in the regulation of cell survival, cell division, angiogenesis, cell differentiation and cell migration. Functions as a potent mitogen in vitro. Acts as a ligand for FGFR1 and integrins. Binds to FGFR1 in the presence of heparin leading to FGFR1 dimerization and activation via sequential autophosphorylation on tyrosine residues which act as docking sites for interacting proteins, leading to the activation of several signaling cascades. Binds to integrin ITGAV:ITGB3. Its binding to integrin, subsequent ternary complex formation with integrin and FGFR1, and the recruitment of PTPN11 to the complex are essential for FGF1 signaling. Induces the phosphorylation and activation of FGFR1, FRS2, MAPK3/ERK1, MAPK1/ERK2 and AKT1. Can induce angiogenesis. The sequence is that of Fibroblast growth factor 1 (FGF1) from Mesocricetus auratus (Golden hamster).